We begin with the raw amino-acid sequence, 286 residues long: Acyl-CoA thioesterase 2 (286 aa).

Catalysis depends on charge relay system residues Asp-204, Thr-228, and Gln-278.

The protein belongs to the C/M/P thioester hydrolase family. Homotetramer.

It carries out the reaction a fatty acyl-CoA + H2O = a fatty acid + CoA + H(+). Thioesterase that has relatively broad substrate specificity, hydrolyzing primarily medium- and long-chain acyl-CoA substrates to free fatty acids and CoA. The sequence is that of Acyl-CoA thioesterase 2 (tesB) from Haemophilus influenzae (strain ATCC 51907 / DSM 11121 / KW20 / Rd).